Reading from the N-terminus, the 562-residue chain is Tissue-type plasminogen activator (562 aa).

The signal sequence occupies residues 1-22; sequence MDAMKRGLCCVLLLCGAVFVSP. The propeptide occupies 23-32; it reads SQEIHARFRR. Residues 33-35 constitute a propeptide, removed by plasmin; it reads GAR. The Fibronectin type-I domain maps to 39 to 81; the sequence is VICRDEKTQMIYQQHQSWLRPVLRSNRVEYCWCNSGRAQCHSV. Disulfide bonds link C41–C71, C69–C78, C86–C97, C91–C108, C110–C119, C127–C208, C148–C190, C179–C203, C215–C296, C236–C278, C267–C291, C299–C430, C342–C358, C350–C419, C444–C519, C476–C492, and C509–C537. The segment at 42–52 is important for binding to annexin A2; sequence RDEKTQMIYQQ. The 39-residue stretch at 82–120 folds into the EGF-like domain; the sequence is PVKSCSEPRCFNGGTCQQALYFSDFVCQCPEGFAGKCCE. T96 is a glycosylation site (O-linked (Fuc) threonine). Kringle domains lie at 127–208 and 215–296; these read CYED…TPAC and CYFG…VPSC. N152 carries an N-linked (GlcNAc...) asparagine glycan. N-linked (GlcNAc...) asparagine; partial glycosylation occurs at N219. One can recognise a Peptidase S1 domain in the interval 311–561; that stretch reads IKGGLFADIA…YLDWIRDNMR (251 aa). Active-site charge relay system residues include H357 and D406. N-linked (GlcNAc...) asparagine glycosylation is present at N483. The active-site Charge relay system is S513.

The protein belongs to the peptidase S1 family. As to quaternary structure, heterodimer of chain A and chain B held by a disulfide bond. Forms a heterodimer with SERPINA5. Binds to fibrin with high affinity. This interaction leads to an increase in the catalytic efficiency of the enzyme between 100-fold and 1000-fold, due to an increase in affinity for plasminogen. Similarly, binding to heparin increases the activation of plasminogen. Binds to annexin A2, cytokeratin-8, fibronectin and laminin. Binds to mannose receptor and the low-density lipoprotein receptor-related protein (LRP1); these proteins are involved in TPA clearance. Yet unidentified interactions on endothelial cells and vascular smooth muscle cells (VSMC) lead to a 100-fold stimulation of plasminogen activation. In addition, binding to VSMC reduces TPA inhibition by PAI-1 by 30-fold. Binds LRP1B; binding is followed by internalization and degradation. Interacts with SERPINE1. In complex with SERPINE1, interacts with SORL1. Interacts with apyrase from Anopheles gambiae saliva; the interaction results in PLAT activation probably via an allosteric activation mechanism. The single chain, almost fully active enzyme, can be further processed into a two-chain fully active form by a cleavage after Arg-310 catalyzed by plasmin, tissue kallikrein or factor Xa. In terms of processing, differential cell-specific N-linked glycosylation gives rise to two glycoforms, type I (glycosylated at Asn-219) and type II (not glycosylated at Asn-219). The single chain type I glycoform is less readily converted into the two-chain form by plasmin, and the two-chain type I glycoform has a lower activity than the two-chain type II glycoform in the presence of fibrin. Post-translationally, N-glycosylation of Asn-152; the bound oligomannosidic glycan is involved in the interaction with the mannose receptor. Characterization of O-linked glycan was studied in Bowes melanoma cell line. As to expression, synthesized in numerous tissues (including tumors) and secreted into most extracellular body fluids, such as plasma, uterine fluid, saliva, gingival crevicular fluid, tears, seminal fluid, and milk.

It is found in the secreted. The protein localises to the extracellular space. It carries out the reaction Specific cleavage of Arg-|-Val bond in plasminogen to form plasmin.. Its activity is regulated as follows. Inhibited by SERPINA5. Inhibited by SERPINE1. Converts the abundant, but inactive, zymogen plasminogen to plasmin by hydrolyzing a single Arg-Val bond in plasminogen. By controlling plasmin-mediated proteolysis, it plays an important role in tissue remodeling and degradation, in cell migration and many other physiopathological events. During oocyte activation, plays a role in cortical granule reaction in the zona reaction, which contributes to the block to polyspermy. This chain is Tissue-type plasminogen activator, found in Homo sapiens (Human).